A 114-amino-acid polypeptide reads, in one-letter code: MEVRAIYKMARISPFKSRDVARSIKGMDARDAFNVLAFYPKKAARLIRKTLGSAIANAENNHNLRAQDLYVKGVFVDEGPKFRRYQPKARGSAGIIRKRTAHICVVLDEKENKS.

This sequence belongs to the universal ribosomal protein uL22 family. In terms of assembly, part of the 50S ribosomal subunit.

This protein binds specifically to 23S rRNA; its binding is stimulated by other ribosomal proteins, e.g. L4, L17, and L20. It is important during the early stages of 50S assembly. It makes multiple contacts with different domains of the 23S rRNA in the assembled 50S subunit and ribosome. Its function is as follows. The globular domain of the protein is located near the polypeptide exit tunnel on the outside of the subunit, while an extended beta-hairpin is found that lines the wall of the exit tunnel in the center of the 70S ribosome. The polypeptide is Large ribosomal subunit protein uL22 (Methylacidiphilum infernorum (isolate V4) (Methylokorus infernorum (strain V4))).